Reading from the N-terminus, the 238-residue chain is Ureidoacrylate amidohydrolase RutB (238 aa).

Residue Asp35 is the Proton acceptor of the active site. Lys144 is a catalytic residue. Cys177 serves as the catalytic Nucleophile.

The protein belongs to the isochorismatase family. RutB subfamily.

It catalyses the reaction (Z)-3-ureidoacrylate + H2O + H(+) = (Z)-3-aminoacrylate + NH4(+) + CO2. The catalysed reaction is (Z)-3-ureidoacrylate + H2O = (Z)-3-aminoacrylate + carbamate + H(+). The enzyme catalyses (Z)-2-methylureidoacrylate + H2O + H(+) = (Z)-2-methylaminoacrylate + NH4(+) + CO2. Functionally, hydrolyzes ureidoacrylate to form aminoacrylate and carbamate. The carbamate hydrolyzes spontaneously, thereby releasing one of the nitrogen atoms of the pyrimidine ring as ammonia and one of its carbon atoms as CO2. This chain is Ureidoacrylate amidohydrolase RutB, found in Caulobacter vibrioides (strain NA1000 / CB15N) (Caulobacter crescentus).